The following is a 193-amino-acid chain: Ribosome hibernation promotion factor (193 aa).

The protein belongs to the HPF/YfiA ribosome-associated protein family. Long HPF subfamily. In terms of assembly, interacts with 100S ribosomes.

It localises to the cytoplasm. Might modulate either transcription and/or translation. In terms of biological role, required for dimerization of active 70S ribosomes into 100S ribosomes in stationary phase; 100S ribosomes are translationally inactive and sometimes present during exponential growth. In Picosynechococcus sp. (strain ATCC 27264 / PCC 7002 / PR-6) (Agmenellum quadruplicatum), this protein is Ribosome hibernation promotion factor.